Reading from the N-terminus, the 73-residue chain is Exodeoxyribonuclease 7 small subunit (73 aa).

It belongs to the XseB family. In terms of assembly, heterooligomer composed of large and small subunits.

The protein localises to the cytoplasm. It carries out the reaction Exonucleolytic cleavage in either 5'- to 3'- or 3'- to 5'-direction to yield nucleoside 5'-phosphates.. In terms of biological role, bidirectionally degrades single-stranded DNA into large acid-insoluble oligonucleotides, which are then degraded further into small acid-soluble oligonucleotides. This chain is Exodeoxyribonuclease 7 small subunit, found in Streptococcus mutans serotype c (strain ATCC 700610 / UA159).